A 106-amino-acid polypeptide reads, in one-letter code: COX assembly mitochondrial protein homolog (106 aa).

At A2 the chain carries N-acetylalanine. The CHCH domain occupies 28 to 71 (RERCSEQVQDFTKCCKDSGVLMVVKCRKENSALKDCLTSYYKDP). 2 short sequence motifs (cx9C motif) span residues 31–41 (CSEQVQDFTKC) and 53–63 (CRKENSALKDC). 2 cysteine pairs are disulfide-bonded: C31–C63 and C41–C53.

The protein belongs to the CMC family. Component of the MITRAC (mitochondrial translation regulation assembly intermediate of cytochrome c oxidase complex) complex, the core components of this complex being COA3/MITRAC12 and COX14.

It is found in the mitochondrion. Functionally, component of the MITRAC (mitochondrial translation regulation assembly intermediate of cytochrome c oxidase complex) complex, that regulates cytochrome c oxidase assembly. This is COX assembly mitochondrial protein homolog (CMC1) from Bos taurus (Bovine).